The following is a 626-amino-acid chain: MASSCSIRCGSRNILVNAAATFLALLVVLRCFANAEKPSPCQSDVYCRGELLHTIQMASIYKDSKTFVDMKMKRPPDETLKSFREFMERHEQMPTRYQIERFVNDTFDPEGSEFEDWDPDDWTFRPKFLSRILDDDLRNFASELNGIWKMLGRKMKDDVRVNEELYSIIYVPHPVIVPGGRFREFYYWDSYWIVKGLLLSEMYTTVKGMLTNFVSLVDKIGFIPNGGRIYYTMRSQPPMLIPMVDEYLKITHDYEWLENNLYLLEKEFDFWMTNRTVEIEVDGVNYVLARYNEQSSGPRPESYKEDYLTSQSFRTNEEKDNYYSELKTAAESGWDFSSRWFILDGTNKGNLTNLKTRYIIPVDLNSIIYRNAVLLAQYNQRMGNESKVAYYQKRAAEWKRAIQAVLWHDEVGAWLDYDILNDIKRDYFYPTNILPLWTDCYDIAKREEYVSKVLKYLEKNKIMLNLGGIPTTLEHSGEQWDYPNAWPPLQYFVIMALNKTEDPWAQRLAYEISERWVRSNYKAYNETHSMFEKYDATVSGGHGGGGEYEVQLGFGWSNGVIMDLLNRYGDKLTAEDRFVATFHSNSTPQPVVVSTAGQVMTGILALVISLAAGFIGKMRCANNAAQ.

Residues 1-35 (MASSCSIRCGSRNILVNAAATFLALLVVLRCFANA) form the signal peptide. At 36–595 (EKPSPCQSDV…STPQPVVVST (560 aa)) the chain is on the extracellular side. Asn104 is a glycosylation site (N-linked (GlcNAc...) asparagine). Substrate contacts are provided by residues Arg181, 188-189 (WD), Asn225, and 234-236 (RSQ). Asn274 carries an N-linked (GlcNAc...) asparagine glycan. Substrate-binding positions include 299-301 (RPE) and Gly333. The Proton donor/acceptor role is filled by Asp335. Asn350, Asn384, Asn498, and Asn525 each carry an N-linked (GlcNAc...) asparagine glycan. The active-site Proton donor/acceptor is Glu532. Glu547 serves as a coordination point for substrate. The chain crosses the membrane as a helical span at residues 596 to 616 (AGQVMTGILALVISLAAGFIG). Over 617 to 626 (KMRCANNAAQ) the chain is Cytoplasmic.

This sequence belongs to the glycosyl hydrolase 37 family. Monomer. Glycosylated; contains 3.1% carbohydrates.

The protein resides in the membrane. It catalyses the reaction alpha,alpha-trehalose + H2O = alpha-D-glucose + beta-D-glucose. With respect to regulation, inhibited by sodium, potassium and ammonium ions, and by TEMED. The protein is Trehalase of Apis mellifera (Honeybee).